Here is a 93-residue protein sequence, read N- to C-terminus: Parbolysin P2 (93 aa).

Cystine bridges form between Cys-16-Cys-37 and Cys-22-Cys-33.

This sequence belongs to the worm cytolysin family. As to expression, localized within the skin and proboscis and are most readily isolated from body mucus secretions.

The protein localises to the secreted. Its function is as follows. Cytolysin that shows hemolytic activity (on bovine erythrocytes, HC(50)=5.75 mg/ml). This hemolytic activity is completely inhibited by small unilamelar vesicles composed of PC/PG, PC/PI and PC/PS in 1:1 molar ratios (with at least 100 mg/ml concentration). This is Parbolysin P2 from Parborlasia corrugatus (Antarctic nemertean worm).